The chain runs to 552 residues: Harmonin (552 aa).

Residues 1-86 (MDRKVAREFR…LTPRRSRKLK (86 aa)) form an N-terminal domain region. 2 consecutive PDZ domains span residues 87–169 (EVRL…HIGL) and 211–293 (KVFI…AAAG). Positions 194-552 (GVRGSLGSPG…KEYDDELTFF (359 aa)) are mediates interaction with MYO7B. Residue Ser-219 is modified to Phosphoserine. Residues 310–377 (RELQRQELLM…EKFKKQWEED (68 aa)) are a coiled coil. Positions 401–427 (KPKYDQGVEPELEPADDLDGGTEEQGE) are disordered. A compositionally biased stretch (acidic residues) spans 408-427 (VEPELEPADDLDGGTEEQGE). A PDZ 3 domain is found at 452–537 (DVRLLRIKKE…QGGDWIDLVV (86 aa)).

As to quaternary structure, part of the IMAC/intermicrovillar adhesion complex/intermicrovillar tip-link complex composed of ANKS4B, MYO7B, USH1C, CDHR2 and CDHR5. Part of a complex composed of USH1C, USH1G and MYO7A. Interacts with F-actin. Interacts with USH2A. Interacts with SLC4A7. Interacts (via PDZ1 domain) with the C-terminus of USHBP1. Interacts (via N-terminus and PDZ 2 domain) with CDH23. Interacts with USH1G. Interacts with MYO7B. Interacts with CDHR2 and CDHR5; may mediate their interaction with MYO7B at the microvilli tip. Interacts (via PDZ 1 domain) with ANKS4B. Interacts (via PDZ 1 domain) with DOCK4. As to expression, expressed in small intestine, colon, kidney, eye and weakly in pancreas. Expressed also in vestibule of the inner ear.

The protein resides in the cytoplasm. It localises to the cytosol. It is found in the cytoskeleton. The protein localises to the cell projection. Its subcellular location is the microvillus. Its function is as follows. Anchoring/scaffolding protein that is a part of the functional network formed by USH1C, USH1G, CDH23 and MYO7A that mediates mechanotransduction in cochlear hair cells. Required for normal development and maintenance of cochlear hair cell bundles. As part of the intermicrovillar adhesion complex/IMAC plays a role in brush border differentiation, controlling microvilli organization and length. Probably plays a central regulatory role in the assembly of the complex, recruiting CDHR2, CDHR5 and MYO7B to the microvilli tips. This chain is Harmonin (USH1C), found in Homo sapiens (Human).